Here is a 156-residue protein sequence, read N- to C-terminus: Small ribosomal subunit protein uS7 (156 aa).

It belongs to the universal ribosomal protein uS7 family. In terms of assembly, part of the 30S ribosomal subunit. Contacts proteins S9 and S11.

In terms of biological role, one of the primary rRNA binding proteins, it binds directly to 16S rRNA where it nucleates assembly of the head domain of the 30S subunit. Is located at the subunit interface close to the decoding center, probably blocks exit of the E-site tRNA. The sequence is that of Small ribosomal subunit protein uS7 from Tolumonas auensis (strain DSM 9187 / NBRC 110442 / TA 4).